Here is a 34-residue protein sequence, read N- to C-terminus: Kappa-theraphotoxin-Sc1a (34 aa).

3 cysteine pairs are disulfide-bonded: C2–C16, C9–C21, and C15–C28. I34 carries the post-translational modification Isoleucine amide.

It belongs to the neurotoxin 10 (Hwtx-1) family. 57 (ScTx1) subfamily. As to expression, expressed by the venom gland.

It localises to the secreted. Acts as a gating-modifier to inhibit voltage-gated potassium channels. It inhibits delayed Kv2.1/KCNB1 (IC(50) is 12.7 nM), Kv2.1/Kv9.3 (IC(50) is 7.2 nM) (KCNB1/KCNS3), Kv2.2/KCNB2 (IC(50) is 21.4 nM), and transient Kv4.2/KCND2 (IC(50) is 1.2 nM) channels. In Stromatopelma calceatum (Featherleg baboon tarantula), this protein is Kappa-theraphotoxin-Sc1a.